The primary structure comprises 497 residues: Envelope glycoprotein E (497 aa).

Over 1–398 the chain is Virion surface; that stretch reads MCVFQILIIV…GTIIYDILLT (398 aa). N-linked (GlcNAc...) asparagine; by host glycans are attached at residues Asn-60, Asn-133, Asn-148, Asn-203, Asn-277, Asn-366, and Asn-388. The chain crosses the membrane as a helical span at residues 399–419; sequence SLSIGAIIIVIVGGVCIAILI. The Intravirion segment spans residues 420–497; that stretch reads RRRRRRRTRG…KIRKRLDLYH (78 aa).

Belongs to the alphaherpesvirinae glycoprotein E family. In terms of assembly, interacts with gI. In terms of processing, phosphorylated within the acidic cluster. Phosphorylation determines whether endocytosed viral gE traffics to the trans-Golgi network or recycles to the cell membrane.

It is found in the virion membrane. Its subcellular location is the host cell membrane. It localises to the host cell junction. The protein resides in the host Golgi apparatus membrane. The protein localises to the host endosome membrane. Its function is as follows. In epithelial cells, the heterodimer gE/gI is required for the cell-to-cell spread of the virus, by sorting nascent virions to cell junctions. Once the virus reaches the cell junctions, virus particles can spread to adjacent cells extremely rapidly through interactions with cellular receptors that accumulate at these junctions. Implicated in basolateral spread in polarized cells. In neuronal cells, gE/gI is essential for the anterograde spread of the infection throughout the host nervous system. Together with US9, the heterodimer gE/gI is involved in the sorting and transport of viral structural components toward axon tips. This chain is Envelope glycoprotein E (MDV096), found in Gallus gallus (Chicken).